Here is a 133-residue protein sequence, read N- to C-terminus: P2Y purinoceptor 2 (133 aa).

Topologically, residues 1–26 (ISVHRCLGVLRPLHSLRWGRARYARR) are cytoplasmic. Residues 27–47 (VAFAVWVLVLYCQAPVLYFVT) traverse the membrane as a helical segment. Topologically, residues 48-74 (TSTRSSRIICHDTSARELFSHFVAYSS) are extracellular. Residues 75-95 (VMLSLLFAAPFAVILVCYVLM) form a helical membrane-spanning segment. The Cytoplasmic segment spans residues 96–116 (ARRLLKPAYGTSGGLPRAKRK). A helical transmembrane segment spans residues 117 to 133 (SVRTIAIVLTVFVLCFL).

This sequence belongs to the G-protein coupled receptor 1 family.

The protein resides in the cell membrane. In terms of biological role, receptor for ATP and UTP coupled to G-proteins that activate a phosphatidylinositol-calcium second messenger system. This is P2Y purinoceptor 2 (P2RY2) from Bos taurus (Bovine).